A 1012-amino-acid chain; its full sequence is Autotransporter adhesin BpaC (1012 aa).

A signal peptide spans 1–71 (MNRIFKSIWC…PFAEEAMAAN (71 aa)). A surface exposed passenger domain region spans residues 72-921 (NAGVCLTYNG…VGQLNSAVSG (850 aa)). Disordered regions lie at residues 420-746 (GLQG…AGAT) and 785-809 (ENSTANGANSTASGNGSSAFGESAA). A compositionally biased stretch (polar residues) spans 427 to 442 (ANTGTASGDNSTASGD). Over residues 443–504 (NATASGTNST…ANGTNSTASG (62 aa)) the composition is skewed to low complexity. Residues 505-519 (DNSTASGTNASATGE) show a composition bias toward polar residues. The span at 520–588 (NSTATGTDST…ANGTNSTASG (69 aa)) shows a compositional bias: low complexity. A compositionally biased stretch (polar residues) spans 589 to 603 (DNSTASGTNASATGE). Over residues 604–630 (NSTATGTDSTASGSNSTANGTNSTASG) the composition is skewed to low complexity. The span at 631–645 (DNSTASGTNASATGE) shows a compositional bias: polar residues. Low complexity-rich tracts occupy residues 646–700 (NSTA…TASG) and 708–746 (TNASATGENSTATGTASTASGSNSTANGANSTASGAGAT). The outer membrane translocation of the passenger domain stretch occupies residues 922 to 959 (IRNQMDGMQGQIDTLARDAYSGIAAATALTMIPDVDPG). A translocator domain region spans residues 960–1012 (KTLAVGIGTANFKGYQASALGATARITQNLKVKTGVSYSGSNYVWGAGMSYQW).

This sequence belongs to the autotransporter-2 (AT-2) (TC 1.B.40) family. In terms of assembly, homotrimer.

It is found in the cell surface. The protein resides in the cell outer membrane. Its function is as follows. Involved in virulence. Mediates adherence to human respiratory epithelial cells. This chain is Autotransporter adhesin BpaC, found in Burkholderia mallei (strain ATCC 23344).